Reading from the N-terminus, the 442-residue chain is D-serine dehydratase (442 aa).

Residue lysine 118 is modified to N6-(pyridoxal phosphate)lysine.

The protein belongs to the serine/threonine dehydratase family. DsdA subfamily. In terms of assembly, monomer. It depends on pyridoxal 5'-phosphate as a cofactor.

It catalyses the reaction D-serine = pyruvate + NH4(+). In Shigella sonnei (strain Ss046), this protein is D-serine dehydratase.